The primary structure comprises 321 residues: MSKPIQMERGVKYRDADKMALIPIKTVAVERQEILRKPSWMKIKLPADSTRIQGIKVAMRKNGLHSVCEEASCPNLAECFNHGTATFMILGAICTRRCPFCDVAHGRPVTPDANEPEKLAQTIADMGLRYVVVTSVDRDDLRDGGAQHFADCISAIRAKNPNIRIETLVPDFRGRMDRALEIINAAPPDVFNHNLENVPRLYRQVRPGADYHWSLKLLENFKVANPQLPTKSGLMVGLGETNAEIVDVMRDLCRHGVTMLTLGQYLQPSRHHLPVKRYVSPQEFDEMKQEALAMGFTHAACGPFVRSSYHADLQAKGIEVK.

[4Fe-4S] cluster is bound by residues C68, C73, C79, C94, C98, C101, and S308. Residues 80 to 297 (FNHGTATFMI…KQEALAMGFT (218 aa)) enclose the Radical SAM core domain.

This sequence belongs to the radical SAM superfamily. Lipoyl synthase family. It depends on [4Fe-4S] cluster as a cofactor.

Its subcellular location is the cytoplasm. It carries out the reaction [[Fe-S] cluster scaffold protein carrying a second [4Fe-4S](2+) cluster] + N(6)-octanoyl-L-lysyl-[protein] + 2 oxidized [2Fe-2S]-[ferredoxin] + 2 S-adenosyl-L-methionine + 4 H(+) = [[Fe-S] cluster scaffold protein] + N(6)-[(R)-dihydrolipoyl]-L-lysyl-[protein] + 4 Fe(3+) + 2 hydrogen sulfide + 2 5'-deoxyadenosine + 2 L-methionine + 2 reduced [2Fe-2S]-[ferredoxin]. It functions in the pathway protein modification; protein lipoylation via endogenous pathway; protein N(6)-(lipoyl)lysine from octanoyl-[acyl-carrier-protein]: step 2/2. Its function is as follows. Catalyzes the radical-mediated insertion of two sulfur atoms into the C-6 and C-8 positions of the octanoyl moiety bound to the lipoyl domains of lipoate-dependent enzymes, thereby converting the octanoylated domains into lipoylated derivatives. In Sodalis glossinidius (strain morsitans), this protein is Lipoyl synthase.